The chain runs to 419 residues: 1,4-beta-D-glucan cellobiohydrolase CEL6B (419 aa).

An N-terminal signal peptide occupies residues 1–47 (MGESFLLLQPASPALSPTPSSLLLGPTITMRADVLIAALATGALVAA). Residues Trp-111 and Ser-113 each contribute to the substrate site. Residues Asp-152 and Asp-199 each act as proton donor in the active site. A substrate-binding site is contributed by Trp-247. Residue Asn-284 is glycosylated (N-linked (GlcNAc...) asparagine). Position 287 (Asn-287) interacts with substrate. A glycan (N-linked (GlcNAc...) asparagine) is linked at Asn-298. Trp-347 lines the substrate pocket. Asn-364 carries N-linked (GlcNAc...) asparagine glycosylation. Positions 375 and 379 each coordinate substrate.

The protein belongs to the glycosyl hydrolase 6 (cellulase B) family. Both N- and O-glycosylated.

It is found in the secreted. It catalyses the reaction Hydrolysis of (1-&gt;4)-beta-D-glucosidic linkages in cellulose and cellotetraose, releasing cellobiose from the non-reducing ends of the chains.. Its function is as follows. Exoglucanase that plays an important function in biomass degradation by catalyzing the hydrolysis of the non-reducing end beta-1,4-glucosidic linkages in cellulose and cellotetraose to release cellobiose. Hydrolyzes crystalline and amorphous cellulose but is inactive on hydroxyethyl cellulose, mannan, galactomannan, xyloglucan, arabinoxylan, arabinan, xylan, and pectin. The sequence is that of 1,4-beta-D-glucan cellobiohydrolase CEL6B from Podospora anserina (strain S / ATCC MYA-4624 / DSM 980 / FGSC 10383) (Pleurage anserina).